Here is a 428-residue protein sequence, read N- to C-terminus: Serine--tRNA ligase (428 aa).

236 to 238 (TAE) lines the L-serine pocket. Residue 267 to 269 (RSE) participates in ATP binding. E290 serves as a coordination point for L-serine. 354 to 357 (EISS) provides a ligand contact to ATP. L-serine is bound at residue S388.

It belongs to the class-II aminoacyl-tRNA synthetase family. Type-1 seryl-tRNA synthetase subfamily. As to quaternary structure, homodimer. The tRNA molecule binds across the dimer.

It localises to the cytoplasm. The enzyme catalyses tRNA(Ser) + L-serine + ATP = L-seryl-tRNA(Ser) + AMP + diphosphate + H(+). The catalysed reaction is tRNA(Sec) + L-serine + ATP = L-seryl-tRNA(Sec) + AMP + diphosphate + H(+). Its pathway is aminoacyl-tRNA biosynthesis; selenocysteinyl-tRNA(Sec) biosynthesis; L-seryl-tRNA(Sec) from L-serine and tRNA(Sec): step 1/1. Functionally, catalyzes the attachment of serine to tRNA(Ser). Is also able to aminoacylate tRNA(Sec) with serine, to form the misacylated tRNA L-seryl-tRNA(Sec), which will be further converted into selenocysteinyl-tRNA(Sec). In Psychrobacter cryohalolentis (strain ATCC BAA-1226 / DSM 17306 / VKM B-2378 / K5), this protein is Serine--tRNA ligase.